We begin with the raw amino-acid sequence, 618 residues long: Dihydroxy-acid dehydratase (618 aa).

Asp81 serves as a coordination point for Mg(2+). A [2Fe-2S] cluster-binding site is contributed by Cys122. 2 residues coordinate Mg(2+): Asp123 and Lys124. Residue Lys124 is modified to N6-carboxylysine. Position 195 (Cys195) interacts with [2Fe-2S] cluster. Glu491 serves as a coordination point for Mg(2+). The active-site Proton acceptor is the Ser517.

It belongs to the IlvD/Edd family. As to quaternary structure, homodimer. [2Fe-2S] cluster is required as a cofactor. Mg(2+) serves as cofactor.

It carries out the reaction (2R)-2,3-dihydroxy-3-methylbutanoate = 3-methyl-2-oxobutanoate + H2O. The enzyme catalyses (2R,3R)-2,3-dihydroxy-3-methylpentanoate = (S)-3-methyl-2-oxopentanoate + H2O. The protein operates within amino-acid biosynthesis; L-isoleucine biosynthesis; L-isoleucine from 2-oxobutanoate: step 3/4. Its pathway is amino-acid biosynthesis; L-valine biosynthesis; L-valine from pyruvate: step 3/4. Its function is as follows. Functions in the biosynthesis of branched-chain amino acids. Catalyzes the dehydration of (2R,3R)-2,3-dihydroxy-3-methylpentanoate (2,3-dihydroxy-3-methylvalerate) into 2-oxo-3-methylpentanoate (2-oxo-3-methylvalerate) and of (2R)-2,3-dihydroxy-3-methylbutanoate (2,3-dihydroxyisovalerate) into 2-oxo-3-methylbutanoate (2-oxoisovalerate), the penultimate precursor to L-isoleucine and L-valine, respectively. This is Dihydroxy-acid dehydratase from Rhodopseudomonas palustris (strain TIE-1).